The primary structure comprises 370 residues: Tryptophan--tRNA ligase (370 aa).

The 'HIGH' region signature appears at 75–83 (PSGKMHFGH). The 'KMSKS' region signature appears at 255 to 259 (KMSSS).

Belongs to the class-I aminoacyl-tRNA synthetase family.

Its subcellular location is the cytoplasm. The enzyme catalyses tRNA(Trp) + L-tryptophan + ATP = L-tryptophyl-tRNA(Trp) + AMP + diphosphate + H(+). This chain is Tryptophan--tRNA ligase, found in Methanocaldococcus jannaschii (strain ATCC 43067 / DSM 2661 / JAL-1 / JCM 10045 / NBRC 100440) (Methanococcus jannaschii).